Here is a 340-residue protein sequence, read N- to C-terminus: MAKRNAVVVTHTRLRQTGTVVAEAVSQLRVAGFEVAIIDNTEAPDFGVQPPCVSDDTEIVVVLGGDGTILRAAELVHCTQVPILGVNMGHVGFLAEFESFQIDEAIRRVSTHDYSIDERMIAHVDVWLPGATKPIEDWALNDITLERADRGKMVELSIRVDDVEMNSFGADGVIVSTPTGSTAYAFSAGGPVMWPNVKALQLIPLAAHALFARPLIIGSGSTFTIDILDDSMSEGWICCDGRRQRALPQGTRVMVRESRDTLRLARLSGVPFTNRLVSKFDLPVVGWREHARNEASSQSLHHGHTFPAAAYAAGVAVAGDAGVAGTEPDKPGERDGKAGS.

The active-site Proton acceptor is the Asp-66. NAD(+) is bound by residues 66 to 67 (DG), Arg-71, 141 to 142 (ND), Lys-152, Asp-171, 182 to 187 (TAYAFS), and Ala-206. Residues 321–340 (AGVAGTEPDKPGERDGKAGS) are disordered. The span at 327–340 (EPDKPGERDGKAGS) shows a compositional bias: basic and acidic residues.

The protein belongs to the NAD kinase family. A divalent metal cation serves as cofactor.

It is found in the cytoplasm. The enzyme catalyses NAD(+) + ATP = ADP + NADP(+) + H(+). In terms of biological role, involved in the regulation of the intracellular balance of NAD and NADP, and is a key enzyme in the biosynthesis of NADP. Catalyzes specifically the phosphorylation on 2'-hydroxyl of the adenosine moiety of NAD to yield NADP. The chain is NAD kinase from Bifidobacterium longum (strain DJO10A).